We begin with the raw amino-acid sequence, 157 residues long: Peptide methionine sulfoxide reductase MsrA (157 aa).

Cysteine 10 is a catalytic residue.

It belongs to the MsrA Met sulfoxide reductase family.

It carries out the reaction L-methionyl-[protein] + [thioredoxin]-disulfide + H2O = L-methionyl-(S)-S-oxide-[protein] + [thioredoxin]-dithiol. The enzyme catalyses [thioredoxin]-disulfide + L-methionine + H2O = L-methionine (S)-S-oxide + [thioredoxin]-dithiol. Functionally, has an important function as a repair enzyme for proteins that have been inactivated by oxidation. Catalyzes the reversible oxidation-reduction of methionine sulfoxide in proteins to methionine. This Clostridium perfringens (strain SM101 / Type A) protein is Peptide methionine sulfoxide reductase MsrA.